The following is a 497-amino-acid chain: Probable 26S proteasome regulatory subunit rpn3 (497 aa).

The interval 1–27 (MIDDQRDMQVDSVNQEENVDSGETKQN) is disordered. The region spanning 248–428 (IRYQYYLGRI…AFMASNEAMD (181 aa)) is the PCI domain. The span at 470 to 483 (GVEEARRRMDKEMA) shows a compositional bias: basic and acidic residues. The tract at residues 470–497 (GVEEARRRMDKEMAEADLDDDEPDLGEF) is disordered. The segment covering 484-497 (EADLDDDEPDLGEF) has biased composition (acidic residues).

This sequence belongs to the proteasome subunit S3 family. The 26S proteasome is composed of a core protease, known as the 20S proteasome, capped at one or both ends by the 19S regulatory complex (RC). The RC is composed of at least 18 different subunits in two subcomplexes, the base and the lid, which form the portions proximal and distal to the 20S proteolytic core, respectively.

Its function is as follows. Acts as a regulatory subunit of the 26 proteasome which is involved in the ATP-dependent degradation of ubiquitinated proteins. This chain is Probable 26S proteasome regulatory subunit rpn3 (rpn3), found in Schizosaccharomyces pombe (strain 972 / ATCC 24843) (Fission yeast).